The chain runs to 846 residues: FNIP repeat-containing protein DDB_G0289381 (846 aa).

The segment covering 1 to 11 has biased composition (basic residues); it reads MKLLSFKKKPS. Residues 1-39 are disordered; it reads MKLLSFKKKPSLTKSQSCPDKLKNLKEQQKDPKNGANYD. Over residues 20-33 the composition is skewed to basic and acidic residues; the sequence is DKLKNLKEQQKDPK. FNIP repeat units follow at residues 159-193, 194-239, 240-283, and 284-325; these read IPNH…FGEK, FNQV…FGNN, FDQI…FQEN, and FNQP…YGGD. Residues 362–384 form a disordered region; that stretch reads SSISLDISGGGSGSGSGVNSTTT. FNIP repeat units follow at residues 458-500, 501-546, and 654-693; these read FQQL…FGDG, FNQQ…FGKS, and FNQS…MFNK. The segment at 702–734 is disordered; that stretch reads SNNNNENNNENNNENNNENNNENNNENNNNTNS. Residues 702–734 adopt a coiled-coil conformation; it reads SNNNNENNNENNNENNNENNNENNNENNNNTNS.

This Dictyostelium discoideum (Social amoeba) protein is FNIP repeat-containing protein DDB_G0289381.